We begin with the raw amino-acid sequence, 252 residues long: Small ribosomal subunit protein uS2 (252 aa).

Residues 231 to 252 (SVESTAQEQVEETAQEETAVEA) form a disordered region. The segment covering 239-252 (QVEETAQEETAVEA) has biased composition (acidic residues).

Belongs to the universal ribosomal protein uS2 family.

This Acetivibrio thermocellus (strain ATCC 27405 / DSM 1237 / JCM 9322 / NBRC 103400 / NCIMB 10682 / NRRL B-4536 / VPI 7372) (Clostridium thermocellum) protein is Small ribosomal subunit protein uS2.